A 518-amino-acid polypeptide reads, in one-letter code: Retinal dehydrogenase 2 (518 aa).

Position 168 is a phosphotyrosine (Tyr-168). NAD(+) contacts are provided by residues 184 to 186 (IPW), 210 to 213 (KPAE), and 264 to 266 (STE). Glu-286 acts as the Proton acceptor in catalysis. Cys-320 acts as the Nucleophile in catalysis. Ser-351 bears the Phosphoserine mark. NAD(+) is bound by residues 366-370 (KQYNK) and Glu-417.

The protein belongs to the aldehyde dehydrogenase family. As to quaternary structure, homotetramer.

Its subcellular location is the cytoplasm. The enzyme catalyses retinal + NAD(+) + H2O = retinoate + NADH + 2 H(+). The catalysed reaction is all-trans-retinal + NAD(+) + H2O = all-trans-retinoate + NADH + 2 H(+). It carries out the reaction all-trans-13,14-dihydroretinal + NAD(+) + H2O = all-trans-13,14-dihydroretinoate + NADH + 2 H(+). The protein operates within cofactor metabolism; retinol metabolism. Its function is as follows. Catalyzes the NAD-dependent oxidation of aldehyde substrates, such as all-trans-retinal and all-trans-13,14-dihydroretinal, to their corresponding carboxylic acids, all-trans-retinoate and all-trans-13,14-dihydroretinoate, respectively. Retinoate signaling is critical for the transcriptional control of many genes, for instance it is crucial for initiation of meiosis in both male and female. Recognizes retinal as substrate, both in its free form and when bound to cellular retinol-binding protein. Can metabolize octanal and decanal, but has only very low activity with benzaldehyde, acetaldehyde and propanal. Displays complete lack of activity with citral. The polypeptide is Retinal dehydrogenase 2 (ALDH1A2) (Homo sapiens (Human)).